Consider the following 147-residue polypeptide: Insertion element IS402 uncharacterized 16.2 kDa protein (147 aa).

Residues 106–147 are disordered; it reads DSSSIRAVGAGQKLGQTPPIARDPVPSTTSSPTPTVRRSPRS. Positions 129 to 147 are enriched in low complexity; the sequence is PVPSTTSSPTPTVRRSPRS.

This sequence belongs to the transposase 6 family.

The chain is Insertion element IS402 uncharacterized 16.2 kDa protein from Burkholderia cepacia (Pseudomonas cepacia).